The following is a 486-amino-acid chain: Galactose-1-phosphate uridylyltransferase (486 aa).

Belongs to the galactose-1-phosphate uridylyltransferase type 2 family.

The protein resides in the cytoplasm. It catalyses the reaction alpha-D-galactose 1-phosphate + UDP-alpha-D-glucose = alpha-D-glucose 1-phosphate + UDP-alpha-D-galactose. The protein operates within carbohydrate metabolism; galactose metabolism. This Lacticaseibacillus casei (Lactobacillus casei) protein is Galactose-1-phosphate uridylyltransferase.